Consider the following 205-residue polypeptide: Phosphoribosyl-dephospho-CoA transferase (205 aa).

Catalysis depends on residues Asp-134 and Asp-136.

Belongs to the MdcG family.

The enzyme catalyses apo-[malonate decarboxylase ACP] + 2'-(5''-triphospho-alpha-D-ribosyl)-3'-dephospho-CoA = holo-[malonate decarboxylase ACP] + diphosphate. Its function is as follows. Transfers 2'-(5-triphosphoribosyl)-3'-dephosphocoenzyme-A to the apo-[acyl-carrier-protein] of the malonate decarboxylase to yield holo-[acyl-carrier-protein]. The sequence is that of Phosphoribosyl-dephospho-CoA transferase from Klebsiella pneumoniae (strain 342).